The following is a 325-amino-acid chain: MNDIETRDTGTKNDNSSEFNLSVKSHKRKRSFDDENLELEESREETSGGILKKAKTQSFSESLERFRFAHAGSNNEYRKTDVVKNSDTDNGLLKSAVETITLENGLRNRRVNVTKKSTLKASVKKSTLKKKNEVDPALLQGVPDYICENPYAIIVGLNPGITSSLKGHAFASPSNRFWKMLNKSKLLEGNAEFTYLNDKDLPAHGLGITNLCARPSSSGADLRKEEMQDGARILYEKVKRYRPQVGLFISGKGIWEEMYKMLTGKKLPKTFVFGWQPEKFGDANVFVGISSSGRAAGYSDEKKQNLWNLFAEEVNRHREIVKHAV.

Positions 1 to 11 (MNDIETRDTGT) are enriched in basic and acidic residues. The disordered stretch occupies residues 1 to 50 (MNDIETRDTGTKNDNSSEFNLSVKSHKRKRSFDDENLELEESREETSGGI). Over residues 12 to 23 (KNDNSSEFNLSV) the composition is skewed to polar residues. A compositionally biased stretch (acidic residues) spans 34–43 (DENLELEESR).

This sequence belongs to the uracil-DNA glycosylase (UDG) superfamily. TDG/mug family.

Its subcellular location is the nucleus. It carries out the reaction Specifically hydrolyzes mismatched double-stranded DNA and polynucleotides, releasing free uracil.. In terms of biological role, removes uracil from G/U mispairs in ssDNA. Also corrects G/G mispairs. Does not catalyze the removal of thymine from G/T mispairs. The sequence is that of G/U mismatch-specific uracil DNA glycosylase (thp1) from Schizosaccharomyces pombe (strain 972 / ATCC 24843) (Fission yeast).